The primary structure comprises 721 residues: MQGQTQSISFDGREIRLTTGRYAPQAGGSVMIECGDTSVLVTATRSKGRDGIDFLPLICDYEERLYAAGRIPGSFMRRESRPPERATLICRLIDRPMRPLFPSWLRDDLQIVATCMSLDERVPADVLAVTGASMATLLAKIPFYGPMAAVRVGLLGDDFVLNPSYREIERGDLDLVVAGTPQGVVMVEAGANQLPEGDVIEAIDFGYEAVSELIKAQQSILKEAGIEQVIPEAPEQDKTLPVYLEKACSKSIGEVLGQFEQTKAERDEKLDAIRSTTAETIQGLKDSDPVRVAVSANGKALPNSFKALTKTLMRQQILKDGKRVDGRNLDQVRPISAAAGVLPKRVHGSGLFQRGLTQVLSTATLGTPSDAQEMDDLNPSNEKTYLHHYNFPAYSVGETRPMRSPGRREIGHGALAERAIVPVLPAKDTFPYVVRVVSEVLSSNGSTSMGSVCGSTLALMDAGVPLKSPVSGAAMGLIKEGDEVKILTDIQGIEDFLVDMDFKVAGTDKGITALQMDMKITGLPVSIVADAVNQARPARLHILEKMMEAIESPREGLSPHAPRLLSFRIDPELIGTVIGPGGRTIKNITERTNTKIDIEDSGIVTIASHDGAAAEEAQKIIEGLTRKVNEGEVFTGSITRIIPIGAFVEILPGKEGMIHISQLSEARVEKVEDVVKVGDEVTVRVREIDNRGRINLTLRGVPQSGESADSQPAPTPVAPLS.

Residues Asp-495 and Asp-501 each coordinate Mg(2+). Residues 562 to 621 (PRLLSFRIDPELIGTVIGPGGRTIKNITERTNTKIDIEDSGIVTIASHDGAAAEEAQKII) enclose the KH domain. The 69-residue stretch at 631 to 699 (GEVFTGSITR…NRGRINLTLR (69 aa)) folds into the S1 motif domain. The interval 700 to 721 (GVPQSGESADSQPAPTPVAPLS) is disordered.

The protein belongs to the polyribonucleotide nucleotidyltransferase family. Mg(2+) serves as cofactor.

It is found in the cytoplasm. The enzyme catalyses RNA(n+1) + phosphate = RNA(n) + a ribonucleoside 5'-diphosphate. Functionally, involved in mRNA degradation. Catalyzes the phosphorolysis of single-stranded polyribonucleotides processively in the 3'- to 5'-direction. The sequence is that of Polyribonucleotide nucleotidyltransferase from Synechococcus sp. (strain CC9311).